Consider the following 341-residue polypeptide: Uroporphyrinogen decarboxylase (341 aa).

Substrate-binding positions include 25–29 (RQAGR), Phe-44, Asp-74, Tyr-151, Ser-206, and His-318.

Belongs to the uroporphyrinogen decarboxylase family. Homodimer.

It is found in the cytoplasm. The enzyme catalyses uroporphyrinogen III + 4 H(+) = coproporphyrinogen III + 4 CO2. Its pathway is porphyrin-containing compound metabolism; protoporphyrin-IX biosynthesis; coproporphyrinogen-III from 5-aminolevulinate: step 4/4. Catalyzes the decarboxylation of four acetate groups of uroporphyrinogen-III to yield coproporphyrinogen-III. This Christiangramia forsetii (strain DSM 17595 / CGMCC 1.15422 / KT0803) (Gramella forsetii) protein is Uroporphyrinogen decarboxylase.